The primary structure comprises 199 residues: N-(5'-phosphoribosyl)anthranilate isomerase (199 aa).

The protein belongs to the TrpF family.

It carries out the reaction N-(5-phospho-beta-D-ribosyl)anthranilate = 1-(2-carboxyphenylamino)-1-deoxy-D-ribulose 5-phosphate. It participates in amino-acid biosynthesis; L-tryptophan biosynthesis; L-tryptophan from chorismate: step 3/5. In Sulfolobus acidocaldarius (strain ATCC 33909 / DSM 639 / JCM 8929 / NBRC 15157 / NCIMB 11770), this protein is N-(5'-phosphoribosyl)anthranilate isomerase.